Reading from the N-terminus, the 59-residue chain is uncharacterized protein (59 aa).

The interval 1-59 is disordered; it reads MAKKPGENTGKNGGIYQEVGPRGGKKDNFATVKDNERLPPTTKPGNGWVLDKRTPDSKK. 2 stretches are compositionally biased toward basic and acidic residues: residues 24–37 and 50–59; these read GKKD…DNER and LDKRTPDSKK.

This is an uncharacterized protein from Salmonella phage P22 (Bacteriophage P22).